A 416-amino-acid polypeptide reads, in one-letter code: Phosphoglycerate kinase (416 aa).

(2R)-3-phosphoglycerate is bound by residues Val-23, Asp-24, Phe-25, Asn-26, Gln-38, Arg-39, Ser-62, His-63, Gly-65, Arg-66, Leu-121, Arg-122, His-168, and Arg-169. Position 212 (Gly-212) interacts with ADP. Gly-212 lines the CDP pocket. AMP is bound by residues Ala-213 and Lys-214. Residue Ala-213 participates in ATP binding. A Mg(2+)-binding site is contributed by Ala-213. Residues Ala-216 and Asp-217 each coordinate Mg(2+). Asp-217 lines the CDP pocket. Residue Lys-218 coordinates AMP. Lys-218 is an ATP binding site. Gly-236 is a binding site for ADP. Residue Gly-236 participates in CDP binding. AMP contacts are provided by Gly-237 and Gly-311. Residues Gly-237 and Gly-311 each coordinate ATP. 2 residues coordinate CDP: Gly-336 and Phe-341. Phe-341 contacts ADP. Glu-342 serves as a coordination point for AMP. The ATP site is built by Glu-342, Asp-373, and Thr-374. Asp-373 is a Mg(2+) binding site.

It belongs to the phosphoglycerate kinase family. Monomer. Mg(2+) is required as a cofactor.

Its subcellular location is the cytoplasm. It is found in the mitochondrion. The catalysed reaction is (2R)-3-phosphoglycerate + ATP = (2R)-3-phospho-glyceroyl phosphate + ADP. It functions in the pathway carbohydrate degradation; glycolysis; pyruvate from D-glyceraldehyde 3-phosphate: step 2/5. Its function is as follows. Catalyzes one of the two ATP producing reactions in the glycolytic pathway via the reversible conversion of 1,3-diphosphoglycerate to 3-phosphoglycerate. Both L- and D- forms of purine and pyrimidine nucleotides can be used as substrates, but the activity is much lower on pyrimidines. Negatively regulates the biosynthesis of acetyl-CoA from pyruvate in the mitochondrion. In Kluyveromyces lactis (strain ATCC 8585 / CBS 2359 / DSM 70799 / NBRC 1267 / NRRL Y-1140 / WM37) (Yeast), this protein is Phosphoglycerate kinase (PGK).